The primary structure comprises 742 residues: Catalase-peroxidase (742 aa).

The tract at residues 1 to 43 (MSDSCPVAHEGNTQSTSESENPVIPSPTPAANRPRNNRDWWPN) is disordered. Over residues 11 to 20 (GNTQSTSESE) the composition is skewed to polar residues. The segment at residues 109 to 231 (WHAAGTYRIA…LGAVQMGLIY (123 aa)) is a cross-link (tryptophyl-tyrosyl-methioninium (Trp-Tyr) (with M-257)). The active-site Proton acceptor is H110. The tryptophyl-tyrosyl-methioninium (Tyr-Met) (with W-109) cross-link spans 231-257 (YVNPEGPNGQPDPLAAARDIRETFSRM). Residue H272 participates in heme b binding.

It belongs to the peroxidase family. Peroxidase/catalase subfamily. In terms of assembly, homodimer or homotetramer. The cofactor is heme b. In terms of processing, formation of the three residue Trp-Tyr-Met cross-link is important for the catalase, but not the peroxidase activity of the enzyme.

It catalyses the reaction H2O2 + AH2 = A + 2 H2O. It carries out the reaction 2 H2O2 = O2 + 2 H2O. Bifunctional enzyme with both catalase and broad-spectrum peroxidase activity. This chain is Catalase-peroxidase, found in Rhodococcus jostii (strain RHA1).